A 465-amino-acid polypeptide reads, in one-letter code: GDNF family receptor alpha-2 (465 aa).

A signal peptide spans 1–21 (MILANAFCIVLFVDETLRSLA). 14 disulfide bridges follow: cysteine 40–cysteine 93, cysteine 47–cysteine 53, cysteine 63–cysteine 78, cysteine 95–cysteine 105, cysteine 159–cysteine 220, cysteine 166–cysteine 172, cysteine 183–cysteine 198, cysteine 193–cysteine 239, cysteine 222–cysteine 227, cysteine 249–cysteine 321, cysteine 256–cysteine 262, cysteine 273–cysteine 291, cysteine 283–cysteine 345, and cysteine 323–cysteine 333. 3 N-linked (GlcNAc...) asparagine glycosylation sites follow: asparagine 355, asparagine 387, and asparagine 412. Serine 445 carries the GPI-anchor amidated serine lipid modification. The propeptide at 446 to 465 (RHRAARILPAVPIVLLKLLL) is removed in mature form.

It belongs to the GDNFR family. In terms of assembly, interacts with NRTN ligand and RET: forms a 2:2:2 ternary complex composed of NRTN ligand, GFRA2 and RET receptor.

It localises to the cell membrane. Functionally, receptor for neurturin (NRTN), a growth factor that supports the survival of sympathetic neurons. NRTN-binding leads to autophosphorylation and activation of the RET receptor. The chain is GDNF family receptor alpha-2 (GFRA2) from Gallus gallus (Chicken).